Here is a 148-residue protein sequence, read N- to C-terminus: Flavodoxin (148 aa).

Positions 4 to 145 (ALIVYGSTTG…DIVGWAHDVR (142 aa)) constitute a Flavodoxin-like domain.

This sequence belongs to the flavodoxin family. FMN serves as cofactor.

Low-potential electron donor to a number of redox enzymes. The polypeptide is Flavodoxin (Nitratidesulfovibrio vulgaris (strain ATCC 29579 / DSM 644 / CCUG 34227 / NCIMB 8303 / VKM B-1760 / Hildenborough) (Desulfovibrio vulgaris)).